Consider the following 328-residue polypeptide: Stress response kinase A (328 aa).

D201 functions as the Proton acceptor in the catalytic mechanism. Mg(2+) contacts are provided by N206 and D217. Residue D217 is part of the active site.

This sequence belongs to the SrkA/RdoA protein kinase family. In terms of assembly, monomer. It depends on Mg(2+) as a cofactor.

Its subcellular location is the cytoplasm. It catalyses the reaction L-seryl-[protein] + ATP = O-phospho-L-seryl-[protein] + ADP + H(+). The enzyme catalyses L-threonyl-[protein] + ATP = O-phospho-L-threonyl-[protein] + ADP + H(+). Its function is as follows. A protein kinase that phosphorylates Ser and Thr residues. Probably acts to suppress the effects of stress linked to accumulation of reactive oxygen species. Probably involved in the extracytoplasmic stress response. In Escherichia coli O6:H1 (strain CFT073 / ATCC 700928 / UPEC), this protein is Stress response kinase A.